Reading from the N-terminus, the 420-residue chain is Probable pectate lyase C (420 aa).

Positions M1–A20 are cleaved as a signal peptide. N49, N165, and N202 each carry an N-linked (GlcNAc...) asparagine glycan. R205 is a catalytic residue. One can recognise an EF-hand domain in the interval N262 to M297. The Ca(2+) site is built by D275, D277, D279, Q281, and E286. The disordered stretch occupies residues A357 to D395. The N-linked (GlcNAc...) asparagine glycan is linked to N394.

Belongs to the polysaccharide lyase 1 family. Ca(2+) is required as a cofactor.

The protein resides in the secreted. It catalyses the reaction Eliminative cleavage of (1-&gt;4)-alpha-D-galacturonan to give oligosaccharides with 4-deoxy-alpha-D-galact-4-enuronosyl groups at their non-reducing ends.. In terms of biological role, pectinolytic enzyme consist of four classes of enzymes: pectin lyase, polygalacturonase, pectin methylesterase and rhamnogalacturonase. Among pectinolytic enzymes, pectin lyase is the most important in depolymerization of pectin, since it cleaves internal glycosidic bonds of highly methylated pectins. Favors pectate, the anion, over pectin, the methyl ester. This is Probable pectate lyase C (plyC) from Neosartorya fischeri (strain ATCC 1020 / DSM 3700 / CBS 544.65 / FGSC A1164 / JCM 1740 / NRRL 181 / WB 181) (Aspergillus fischerianus).